Here is a 432-residue protein sequence, read N- to C-terminus: 3-phosphoshikimate 1-carboxyvinyltransferase (432 aa).

3-phosphoshikimate is bound by residues Lys23, Ser24, and Arg28. Residue Lys23 coordinates phosphoenolpyruvate. Gly95 and Arg123 together coordinate phosphoenolpyruvate. Residues Ser167, Gln169, Asp317, and Lys344 each contribute to the 3-phosphoshikimate site. Gln169 serves as a coordination point for phosphoenolpyruvate. The Proton acceptor role is filled by Asp317. Residues Arg348 and Arg390 each contribute to the phosphoenolpyruvate site.

This sequence belongs to the EPSP synthase family. In terms of assembly, monomer.

Its subcellular location is the cytoplasm. The catalysed reaction is 3-phosphoshikimate + phosphoenolpyruvate = 5-O-(1-carboxyvinyl)-3-phosphoshikimate + phosphate. Its pathway is metabolic intermediate biosynthesis; chorismate biosynthesis; chorismate from D-erythrose 4-phosphate and phosphoenolpyruvate: step 6/7. Catalyzes the transfer of the enolpyruvyl moiety of phosphoenolpyruvate (PEP) to the 5-hydroxyl of shikimate-3-phosphate (S3P) to produce enolpyruvyl shikimate-3-phosphate and inorganic phosphate. The protein is 3-phosphoshikimate 1-carboxyvinyltransferase of Staphylococcus aureus (strain N315).